A 215-amino-acid polypeptide reads, in one-letter code: Myelin protein zero-like protein 2 (215 aa).

The N-terminal stretch at methionine 1–alanine 26 is a signal peptide. The region spanning valine 27–serine 141 is the Ig-like V-type domain. At valine 27–leucine 154 the chain is on the extracellular side. Asparagine 39 and asparagine 118 each carry an N-linked (GlcNAc...) asparagine glycan. Cysteine 47 and cysteine 123 form a disulfide bridge. A helical membrane pass occupies residues alanine 155 to phenylalanine 175. The Cytoplasmic segment spans residues glutamine 176 to aspartate 215.

It belongs to the myelin P0 protein family. In terms of tissue distribution, widely expressed. In fetal tissues, highest expression in the inner ear. In adult tissues, highest levels in thymus and lung.

Its subcellular location is the membrane. Mediates homophilic cell-cell adhesion. This chain is Myelin protein zero-like protein 2 (MPZL2), found in Homo sapiens (Human).